A 72-amino-acid chain; its full sequence is Cell division protein ZapB (72 aa).

Residues 1-72 (MSSEILDQLE…RSLLGQIDNV (72 aa)) adopt a coiled-coil conformation.

Belongs to the ZapB family. As to quaternary structure, homodimer. The ends of the coiled-coil dimer bind to each other, forming polymers. Interacts with FtsZ.

The protein resides in the cytoplasm. Its function is as follows. Non-essential, abundant cell division factor that is required for proper Z-ring formation. It is recruited early to the divisome by direct interaction with FtsZ, stimulating Z-ring assembly and thereby promoting cell division earlier in the cell cycle. Its recruitment to the Z-ring requires functional FtsA or ZipA. The sequence is that of Cell division protein ZapB from Actinobacillus succinogenes (strain ATCC 55618 / DSM 22257 / CCUG 43843 / 130Z).